A 154-amino-acid polypeptide reads, in one-letter code: Vimentin (154 aa).

The span at 1-13 (MSTRSVSSSSYRR) shows a compositional bias: low complexity. The disordered stretch occupies residues 1–31 (MSTRSVSSSSYRRMFGGPGTASRPSSTRSYV). N-acetylserine is present on serine 2. Positions 2 to 95 (STRSVSSSSY…FSLADAINTE (94 aa)) are head. Serine 5 is subject to Phosphoserine. A Phosphoserine; by PKA and PKC; alternate modification is found at serine 7. O-linked (GlcNAc) serine; alternate glycosylation occurs at serine 7. Serine 8 is modified (phosphoserine). A phosphoserine; by PKC mark is found at serine 9 and serine 10. The residue at position 20 (threonine 20) is a Phosphothreonine. Serine 25 is subject to Phosphoserine; by PKA and PKC. Residue serine 26 is modified to Phosphoserine; by PKC. O-linked (GlcNAc) threonine glycosylation is present at threonine 33. Serine 34 carries an O-linked (GlcNAc) serine; alternate glycan. The residue at position 34 (serine 34) is a Phosphoserine; by PKC; alternate. Phosphoserine; by CaMK2, PKA, PKC and ROCK2 is present on serine 39. Residue serine 42 is modified to Phosphoserine; by PKC. Position 49 is a phosphoserine (serine 49). Tyrosine 53 is subject to Phosphotyrosine. Serine 55 is subject to Phosphoserine. Phosphoserine; by CDK5 and CDK1 is present on serine 56. Phosphotyrosine is present on tyrosine 61. The residue at position 66 (serine 66) is a Phosphoserine; by PKA and PKC. Serine 72 carries the post-translational modification Phosphoserine; by AURKB and ROCK2. At serine 83 the chain carries Phosphoserine; by CaMK2. A Phosphoserine modification is found at serine 87. The segment at 96–131 (FKNTRTNEKVELQELNDRFANYIDKVRFLEQQNKIL) is coil 1A. The stretch at 96–131 (FKNTRTNEKVELQELNDRFANYIDKVRFLEQQNKIL) forms a coiled coil. The IF rod domain maps to 103–154 (EKVELQELNDRFANYIDKVRFLEQQNKILLAELEQLKGQGKSRLGHLYEEEM). A Glycyl lysine isopeptide (Lys-Gly) (interchain with G-Cter in SUMO2) cross-link involves residue lysine 104. Tyrosine 117 is modified (phosphotyrosine). Lysine 120, lysine 129, and lysine 139 each carry N6-acetyllysine; alternate. N6-succinyllysine; alternate is present on residues lysine 120 and lysine 129. Glycyl lysine isopeptide (Lys-Gly) (interchain with G-Cter in SUMO2); alternate cross-links involve residues lysine 120, lysine 129, and lysine 139. The tract at residues 132 to 153 (LAELEQLKGQGKSRLGHLYEEE) is linker 1. Position 144 is a phosphoserine (serine 144). Methionine 154 is a region of interest (coil 1B).

It belongs to the intermediate filament family. Homomer assembled from elementary dimers. Identified in complexes that contain VIM, EZR, AHNAK, BFSP1, BFSP2, ANK2, PLEC, PRX and spectrin. Interacts with BCAS3. Interacts with LGSN. Interacts with SYNM. Interacts (via rod region) with PLEC (via CH 1 domain). Interacts with STK33. Interacts with LARP6. Interacts with RAB8B. Interacts with TOR1A; the interaction associates TOR1A with the cytoskeleton. Interacts with TOR1AIP1. Interacts with TOR1AIP1. Interacts with DIAPH1. Interacts with EPPK1; interaction is dependent of higher-order structure of intermediate filament. Interacts with the non-receptor tyrosine kinase SRMS; the interaction leads to phosphorylation of VIM. Interacts with NOD2. Interacts (via head region) with CORO1C. Interacts with HDGF. Interacts with PRKCE (via phorbol-ester/DAG-type 2 domain). Interacts with BFSP2. Interacts with PPL. Interacts with PKP1 and PKP2. Interacts with SCRIB (via PDZ domains); the interaction protects SCRIB from proteasomal degradation and facilitates SCRIB localization to intermediate filaments, the interaction is reduced by cell contact inhibition. One of the most prominent phosphoproteins in various cells of mesenchymal origin. Phosphorylation is enhanced during cell division, at which time vimentin filaments are significantly reorganized. Phosphorylation by PKN1 inhibits the formation of filaments. Filament disassembly during mitosis is promoted by phosphorylation at Ser-55 as well as by nestin. Phosphorylated at Ser-56 by CDK5 during neutrophil secretion in the cytoplasm. Phosphorylated by STK33. Phosphorylated on tyrosine residues by SRMS.

It is found in the cytoplasm. Its subcellular location is the cytoskeleton. It localises to the nucleus matrix. The protein resides in the cell membrane. Vimentins are class-III intermediate filaments found in various non-epithelial cells, especially mesenchymal cells. Vimentin is attached to the nucleus, endoplasmic reticulum, and mitochondria, either laterally or terminally. Plays a role in cell directional movement, orientation, cell sheet organization and Golgi complex polarization at the cell migration front. Protects SCRIB from proteasomal degradation and facilitates its localization to intermediate filaments in a cell contact-mediated manner. Functionally, involved with LARP6 in the stabilization of type I collagen mRNAs for CO1A1 and CO1A2. This Ovis aries (Sheep) protein is Vimentin (VIM).